Here is a 509-residue protein sequence, read N- to C-terminus: Photosystem II CP47 reaction center protein (509 aa).

6 helical membrane passes run 21–36 (AVHL…WAGS), 101–115 (IVLS…IWHW), 140–156 (GIHL…FGAF), 203–218 (IAAG…FHLT), 237–252 (VLSS…AFIT), and 457–472 (NFAL…HGSR).

The protein belongs to the PsbB/PsbC family. PsbB subfamily. PSII is composed of 1 copy each of membrane proteins PsbA, PsbB, PsbC, PsbD, PsbE, PsbF, PsbH, PsbI, PsbJ, PsbK, PsbL, PsbM, PsbT, PsbX, PsbY, PsbZ, Psb30/Ycf12, at least 3 peripheral proteins of the oxygen-evolving complex and a large number of cofactors. It forms dimeric complexes. Binds multiple chlorophylls. PSII binds additional chlorophylls, carotenoids and specific lipids. is required as a cofactor.

The protein localises to the plastid. It localises to the chloroplast thylakoid membrane. Its function is as follows. One of the components of the core complex of photosystem II (PSII). It binds chlorophyll and helps catalyze the primary light-induced photochemical processes of PSII. PSII is a light-driven water:plastoquinone oxidoreductase, using light energy to abstract electrons from H(2)O, generating O(2) and a proton gradient subsequently used for ATP formation. The polypeptide is Photosystem II CP47 reaction center protein (Porphyra purpurea (Red seaweed)).